A 158-amino-acid polypeptide reads, in one-letter code: Protein OPG060 (158 aa).

The protein belongs to the orthopoxvirus OPG058 family.

This chain is Protein OPG060 (OPG060), found in Cynomys gunnisoni (Gunnison's prairie dog).